A 49-amino-acid chain; its full sequence is uncharacterized protein (49 aa).

It belongs to the ELIP/psbS family.

The protein localises to the plastid. It localises to the cyanelle. Its function is as follows. Possible role in chlorophyll and/or carotenoid binding. This is an uncharacterized protein from Cyanophora paradoxa.